The chain runs to 393 residues: Formate-dependent phosphoribosylglycinamide formyltransferase (393 aa).

N(1)-(5-phospho-beta-D-ribosyl)glycinamide contacts are provided by residues 22 to 23 and Glu82; that span reads EL. ATP is bound by residues Arg114, Lys155, 160–165, 195–198, and Glu203; these read SSGKGQ and EGFI. One can recognise an ATP-grasp domain in the interval 119 to 308; the sequence is RLAAEELGLP…EFALHARAIL (190 aa). 2 residues coordinate Mg(2+): Glu267 and Glu279. N(1)-(5-phospho-beta-D-ribosyl)glycinamide is bound by residues Asp286, Lys356, and 363-364; that span reads RR.

It belongs to the PurK/PurT family. In terms of assembly, homodimer.

The catalysed reaction is N(1)-(5-phospho-beta-D-ribosyl)glycinamide + formate + ATP = N(2)-formyl-N(1)-(5-phospho-beta-D-ribosyl)glycinamide + ADP + phosphate + H(+). It functions in the pathway purine metabolism; IMP biosynthesis via de novo pathway; N(2)-formyl-N(1)-(5-phospho-D-ribosyl)glycinamide from N(1)-(5-phospho-D-ribosyl)glycinamide (formate route): step 1/1. Involved in the de novo purine biosynthesis. Catalyzes the transfer of formate to 5-phospho-ribosyl-glycinamide (GAR), producing 5-phospho-ribosyl-N-formylglycinamide (FGAR). Formate is provided by PurU via hydrolysis of 10-formyl-tetrahydrofolate. The polypeptide is Formate-dependent phosphoribosylglycinamide formyltransferase (Stutzerimonas stutzeri (strain A1501) (Pseudomonas stutzeri)).